The chain runs to 579 residues: MFS-type transporter sphD (579 aa).

The disordered stretch occupies residues 17–62; it reads SAFAVRAEPDSEPVSEKQGTAETDAETGAGGTEVPAERNGEDDVER. A compositionally biased stretch (basic and acidic residues) spans 51–62; the sequence is PAERNGEDDVER. 8 consecutive transmembrane segments (helical) span residues 73-93, 110-130, 138-158, 168-188, 200-220, 227-247, 267-287, and 294-314; these read AFIGLAASMFVFQVDATALGI, FWANLSYTLCGLVMQPVWASI, PPLYVSMALFFIGSIVFAVAQ, VLQGFGGGGIDVLAEVILADM, LMAIPMAIGNIMGPSVGALFA, WIGWVNLPLLGIGTPLVFFFL, WIGMVLVVVGITIFVLPLSWA, and GAWQTLVPLFLGVAVLVIFAF. The N-linked (GlcNAc...) asparagine glycan is linked to Asn-335. Transmembrane regions (helical) follow at residues 338–358, 367–391, 398–419, 429–449, 460–480, and 541–561; these read LVGGFLHGAVLVSLLQYLPLI, AILSAVSLLPTVIISVVVAAISMML, YVWILRLAWVILTLGTGLLALF, LGLPILWGAGVALLRLNLLPM, GLAIGQFLTIRMFGGLVGLTI, and FQTIFYTMTGLSGLGLVTSLF.

Belongs to the major facilitator superfamily.

It is found in the membrane. MFS-type transporter; part of the gene cluster that mediates the biosynthesis of sphingofungins, bioactive molecules acting as sphingolipid inhibitors via inhibiting serine palmitoyl transferase (SPT). This Aspergillus fumigatus (strain CBS 144.89 / FGSC A1163 / CEA10) (Neosartorya fumigata) protein is MFS-type transporter sphD.